The primary structure comprises 116 residues: uncharacterized protein (116 aa).

Residues 5–113 (EVKMVVLSTE…TGNGLVFYSP (109 aa)) enclose the VOC domain. An Isoglutamyl lysine isopeptide (Lys-Gln) (interchain with Q-Cter in protein Pup) cross-link involves residue K76.

This is an uncharacterized protein from Mycolicibacterium smegmatis (strain ATCC 700084 / mc(2)155) (Mycobacterium smegmatis).